The chain runs to 573 residues: PCNA-interacting partner (573 aa).

Disordered stretches follow at residues 470–505 (VGKA…SKGK) and 531–560 (PKVP…RGKL).

Belongs to the PARI family. Interacts with RAD51 and PCNA. Interacts with PARP1. Interacts with TASOR. As to expression, expressed in the ovary, Sertoli cells of the testis and in granular cells within the cerebellum.

The protein resides in the cytoplasm. The protein localises to the nucleus. In terms of biological role, required to suppress inappropriate homologous recombination, thereby playing a central role DNA repair and in the maintenance of genomic stability. Antagonizes homologous recombination by interfering with the formation of the RAD51-DNA homologous recombination structure. Binds single-strand DNA and poly(A) homopolymers. Positively regulate the poly(ADP-ribosyl)ation activity of PARP1; however such function may be indirect. This chain is PCNA-interacting partner (Parpbp), found in Mus musculus (Mouse).